The sequence spans 234 residues: Adenosine 5'-phosphosulfate reductase (234 aa).

The [4Fe-4S] cluster site is built by Cys120, Cys121, Cys203, and Cys206. Catalysis depends on Cys229, which acts as the Nucleophile; cysteine thiosulfonate intermediate.

This sequence belongs to the PAPS reductase family. CysH subfamily. Requires [4Fe-4S] cluster as cofactor.

It localises to the cytoplasm. It carries out the reaction [thioredoxin]-disulfide + sulfite + AMP + 2 H(+) = adenosine 5'-phosphosulfate + [thioredoxin]-dithiol. It functions in the pathway sulfur metabolism; hydrogen sulfide biosynthesis; sulfite from sulfate. In terms of biological role, catalyzes the formation of sulfite from adenosine 5'-phosphosulfate (APS) using thioredoxin as an electron donor. In Bacillus thuringiensis (strain Al Hakam), this protein is Adenosine 5'-phosphosulfate reductase.